Reading from the N-terminus, the 166-residue chain is NAD(P)H-quinone oxidoreductase subunit I, chloroplastic (166 aa).

2 consecutive 4Fe-4S ferredoxin-type domains span residues glycine 55–lysine 84 and leucine 95–glutamate 124. [4Fe-4S] cluster-binding residues include cysteine 64, cysteine 67, cysteine 70, cysteine 74, cysteine 104, cysteine 107, cysteine 110, and cysteine 114.

This sequence belongs to the complex I 23 kDa subunit family. In terms of assembly, NDH is composed of at least 16 different subunits, 5 of which are encoded in the nucleus. It depends on [4Fe-4S] cluster as a cofactor.

The protein localises to the plastid. The protein resides in the chloroplast thylakoid membrane. It carries out the reaction a plastoquinone + NADH + (n+1) H(+)(in) = a plastoquinol + NAD(+) + n H(+)(out). It catalyses the reaction a plastoquinone + NADPH + (n+1) H(+)(in) = a plastoquinol + NADP(+) + n H(+)(out). Functionally, NDH shuttles electrons from NAD(P)H:plastoquinone, via FMN and iron-sulfur (Fe-S) centers, to quinones in the photosynthetic chain and possibly in a chloroplast respiratory chain. The immediate electron acceptor for the enzyme in this species is believed to be plastoquinone. Couples the redox reaction to proton translocation, and thus conserves the redox energy in a proton gradient. The polypeptide is NAD(P)H-quinone oxidoreductase subunit I, chloroplastic (Rensonia salvadorica).